Reading from the N-terminus, the 579-residue chain is Arginine--tRNA ligase (579 aa).

The short motif at 123–133 (PNLAKEMHVGH) is the 'HIGH' region element.

The protein belongs to the class-I aminoacyl-tRNA synthetase family. Monomer.

It localises to the cytoplasm. It catalyses the reaction tRNA(Arg) + L-arginine + ATP = L-arginyl-tRNA(Arg) + AMP + diphosphate. The sequence is that of Arginine--tRNA ligase from Cellvibrio japonicus (strain Ueda107) (Pseudomonas fluorescens subsp. cellulosa).